Consider the following 487-residue polypeptide: Argininosuccinate lyase (487 aa).

This sequence belongs to the lyase 1 family. Argininosuccinate lyase subfamily.

Its subcellular location is the cytoplasm. The catalysed reaction is 2-(N(omega)-L-arginino)succinate = fumarate + L-arginine. It participates in amino-acid biosynthesis; L-arginine biosynthesis; L-arginine from L-ornithine and carbamoyl phosphate: step 3/3. The sequence is that of Argininosuccinate lyase from Methanothrix thermoacetophila (strain DSM 6194 / JCM 14653 / NBRC 101360 / PT) (Methanosaeta thermophila).